The chain runs to 397 residues: DnaJ homolog subfamily A member 4 (397 aa).

Positions 4-70 (ETQYYDILGV…RDVYDQGGEQ (67 aa)) constitute a J domain. Ser18 carries the phosphoserine modification. Residues 122–206 (GVTKKLALQK…CSGAKVIREK (85 aa)) form a CR-type zinc finger. Zn(2+) is bound by residues Cys135, Cys138, Cys151, Cys154, Cys178, Cys181, Cys194, and Cys197. 4 CXXCXGXG motif repeats span residues 135–142 (CEKCEGVG), 151–158 (CPLCKGRG), 178–185 (CIECKGQG), and 194–201 (CESCSGAK). A Cysteine methyl ester modification is found at Cys394. Residue Cys394 is the site of S-farnesyl cysteine attachment. A propeptide spans 395–397 (QTA) (removed in mature form).

It localises to the membrane. The chain is DnaJ homolog subfamily A member 4 (DNAJA4) from Homo sapiens (Human).